We begin with the raw amino-acid sequence, 93 residues long: Small ribosomal subunit protein uS15 (93 aa).

Belongs to the universal ribosomal protein uS15 family. In terms of assembly, part of the 30S ribosomal subunit. Forms a bridge to the 50S subunit in the 70S ribosome, contacting the 23S rRNA.

Functionally, one of the primary rRNA binding proteins, it binds directly to 16S rRNA where it helps nucleate assembly of the platform of the 30S subunit by binding and bridging several RNA helices of the 16S rRNA. Forms an intersubunit bridge (bridge B4) with the 23S rRNA of the 50S subunit in the ribosome. This chain is Small ribosomal subunit protein uS15, found in Ehrlichia chaffeensis (strain ATCC CRL-10679 / Arkansas).